Here is a 672-residue protein sequence, read N- to C-terminus: Bifunctional polymyxin resistance protein ArnA (672 aa).

Residues 1–310 (MKAIVFAYHD…EMGMVPQAKL (310 aa)) form a formyltransferase ArnAFT region. The Proton donor; for formyltransferase activity role is filled by H104. Residues R114 and 136–140 (VSRAD) each bind (6R)-10-formyltetrahydrofolate. The dehydrogenase ArnADH stretch occupies residues 320 to 672 (RRTRVLILGV…HADNVTDTQG (353 aa)). NAD(+)-binding positions include D353 and 374 to 375 (DI). Residues A399, Y404, and 438-439 (TS) contribute to the UDP-alpha-D-glucuronate site. Residue E440 is the Proton acceptor; for decarboxylase activity of the active site. Residues R466, N498, 532–541 (KLVDGGAQKR), and Y619 each bind UDP-alpha-D-glucuronate. R625 serves as the catalytic Proton donor; for decarboxylase activity.

The protein in the N-terminal section; belongs to the Fmt family. UDP-L-Ara4N formyltransferase subfamily. This sequence in the C-terminal section; belongs to the NAD(P)-dependent epimerase/dehydratase family. UDP-glucuronic acid decarboxylase subfamily. In terms of assembly, homohexamer, formed by a dimer of trimers.

It catalyses the reaction UDP-alpha-D-glucuronate + NAD(+) = UDP-beta-L-threo-pentopyranos-4-ulose + CO2 + NADH. The enzyme catalyses UDP-4-amino-4-deoxy-beta-L-arabinose + (6R)-10-formyltetrahydrofolate = UDP-4-deoxy-4-formamido-beta-L-arabinose + (6S)-5,6,7,8-tetrahydrofolate + H(+). It functions in the pathway nucleotide-sugar biosynthesis; UDP-4-deoxy-4-formamido-beta-L-arabinose biosynthesis; UDP-4-deoxy-4-formamido-beta-L-arabinose from UDP-alpha-D-glucuronate: step 1/3. Its pathway is nucleotide-sugar biosynthesis; UDP-4-deoxy-4-formamido-beta-L-arabinose biosynthesis; UDP-4-deoxy-4-formamido-beta-L-arabinose from UDP-alpha-D-glucuronate: step 3/3. The protein operates within bacterial outer membrane biogenesis; lipopolysaccharide biosynthesis. In terms of biological role, bifunctional enzyme that catalyzes the oxidative decarboxylation of UDP-glucuronic acid (UDP-GlcUA) to UDP-4-keto-arabinose (UDP-Ara4O) and the addition of a formyl group to UDP-4-amino-4-deoxy-L-arabinose (UDP-L-Ara4N) to form UDP-L-4-formamido-arabinose (UDP-L-Ara4FN). The modified arabinose is attached to lipid A and is required for resistance to polymyxin and cationic antimicrobial peptides. This is Bifunctional polymyxin resistance protein ArnA from Pectobacterium carotovorum subsp. carotovorum (strain PC1).